A 69-amino-acid chain; its full sequence is Cytochrome c oxidase copper chaperone (69 aa).

Cu cation contacts are provided by cysteine 23 and cysteine 24. The CHCH domain maps to cysteine 23–valine 65. 2 short sequence motifs (cx9C motif) span residues cysteine 26–cysteine 36 and cysteine 47–cysteine 57. Intrachain disulfides connect cysteine 26-cysteine 57 and cysteine 36-cysteine 47.

The protein belongs to the COX17 family.

The protein resides in the mitochondrion intermembrane space. Functionally, copper chaperone for cytochrome c oxidase (COX). Binds two copper ions and deliver them to the Cu(A) site of COX. In Saccharomyces cerevisiae (strain ATCC 204508 / S288c) (Baker's yeast), this protein is Cytochrome c oxidase copper chaperone (COX17).